The sequence spans 350 residues: Guanine nucleotide-binding protein G(t) subunit alpha-1 (350 aa).

Residues 1–21 (MGAGASAEEKHSRELEKKLKE) form a disordered region. Gly2 is lipidated: N-myristoyl glycine. Positions 7–21 (AEEKHSRELEKKLKE) are enriched in basic and acidic residues. Positions 28 to 350 (RTVKLLLLGA…KENLKDCGLF (323 aa)) constitute a G-alpha domain. A G1 motif region spans residues 31–44 (KLLLLGAGESGKST). 36–43 (GAGESGKS) contacts GTP. Mg(2+) is bound at residue Ser43. Tyr142 bears the Phosphotyrosine mark. GTP is bound by residues Asp146, 171–177 (LRSRVKT), Gly199, 265–268 (NKKD), and Ala322. The G2 motif stretch occupies residues 169–177 (DVLRSRVKT). Thr177 is a binding site for Mg(2+). Positions 192–201 (FRMFDVGGQR) are G3 motif. Positions 261–268 (VLFLNKKD) are G4 motif. The interval 320–325 (TCATDT) is G5 motif. The interaction with RHO stretch occupies residues 340–350 (IKENLKDCGLF).

Belongs to the G-alpha family. G(i/o/t/z) subfamily. As to quaternary structure, heterotrimeric G proteins are composed of 3 subunits alpha, beta and gamma. The alpha chain contains the guanine nucleotide binding site. Interacts with RHO. Interacts with RGS9 and PDE6G. Interacts (when myristoylated) with UNC119; interaction is required for localization in sensory neurons. As to expression, in the retina, expressed in the rod photoreceptors.

The protein localises to the cell projection. Its subcellular location is the cilium. The protein resides in the photoreceptor outer segment. It is found in the membrane. It localises to the photoreceptor inner segment. Its function is as follows. Functions as a signal transducer for the rod photoreceptor RHO. Required for normal RHO-mediated light perception by the retina. Guanine nucleotide-binding proteins (G proteins) function as transducers downstream of G protein-coupled receptors (GPCRs), such as the photoreceptor RHO. The alpha chain contains the guanine nucleotide binding site and alternates between an active, GTP-bound state and an inactive, GDP-bound state. Activated RHO promotes GDP release and GTP binding. Signaling is mediated via downstream effector proteins, such as cGMP-phosphodiesterase. The protein is Guanine nucleotide-binding protein G(t) subunit alpha-1 (Gnat1) of Mus musculus (Mouse).